The following is a 70-amino-acid chain: Small ribosomal subunit protein bS21A (70 aa).

Belongs to the bacterial ribosomal protein bS21 family.

This is Small ribosomal subunit protein bS21A from Paraburkholderia xenovorans (strain LB400).